Here is a 469-residue protein sequence, read N- to C-terminus: Arginine biosynthesis bifunctional protein ArgJ, chloroplastic (469 aa).

Substrate is bound by residues threonine 213, lysine 239, threonine 250, glutamate 337, asparagine 464, and threonine 469. The Nucleophile role is filled by threonine 250.

This sequence belongs to the ArgJ family. As to quaternary structure, heterodimer of an alpha and a beta chain.

Its subcellular location is the plastid. The protein localises to the chloroplast. The catalysed reaction is N(2)-acetyl-L-ornithine + L-glutamate = N-acetyl-L-glutamate + L-ornithine. The enzyme catalyses L-glutamate + acetyl-CoA = N-acetyl-L-glutamate + CoA + H(+). The protein operates within amino-acid biosynthesis; L-arginine biosynthesis; L-ornithine and N-acetyl-L-glutamate from L-glutamate and N(2)-acetyl-L-ornithine (cyclic): step 1/1. It participates in amino-acid biosynthesis; L-arginine biosynthesis; N(2)-acetyl-L-ornithine from L-glutamate: step 1/4. Catalyzes two activities which are involved in the cyclic version of arginine biosynthesis: the synthesis of acetylglutamate from glutamate and acetyl-CoA, and of ornithine by transacetylation between acetylornithine and glutamate. The chain is Arginine biosynthesis bifunctional protein ArgJ, chloroplastic from Ricinus communis (Castor bean).